The sequence spans 798 residues: MEPEINCSEFCDSFPGQELDRRPLHDLCKTTITESQHSSTAASPLSPALLGIMWTFLSCGLLLVLFFLAFTIRCRKNRIVKMSSPNLNVVTLLGSCLTYISAYLFGIQDALEGSSVEALIQTRLSLLCIGTSLVFGPILGKSWRLYKVFTQRVPDKRVIIKDLQLLGLVAALVVADVILLVTWVLTDPIQCLQMLGVSMKVTGRDVSCSLTNTHFCASRYSDVWIALVLGCKGLLLLYGAYLAGLTNHVSSPPVNQSLTIMVGVNLLLLTAGLLFVVTRYLHSWPNLVFGLTSGGIFVCTTTVNCCVFIPQLKQWKAFEGENQTMRHMAKYFSTPSKSFHSQFDEDPSCHLRDEKSCMERLLTEKNAVIESLQEQVSNAKEKLVKLMSAECTYDSPEWAVPDAASARGLALPGPSECPAVSENESGAAARDSLHVPAACQHVQGPGASRRDTSPSPAQQDNMPLKQYCDHLDTGCNQKPKAEQSEGPERGDQEPMAPSQRLMADGVACEPHKPRQSPEGLPKKLPGVSSVVREKLQEVLQELDLGSEAPLSPLPCPQQLWKSTTSRSPQKLSPSKLGFSPYVVRRRRAAQRARSHIPGSVGLNVGHQANSTVSSSQSGLIVQNRDSPRLDHHNARSKVPRSSSVKPSPLSEPRRKQGTLEGSKQCETEPQEAGGACNVAFPCQSSASVQAQSPAAPCLPSSPALPRQRQPRPRLSPGCPSLSSGCYNLDSESSSSDEFFCRCHRPYCEICFQSSLDSNDSDTSDSDLEQASGLASWEKLWARSKPVVNFKDDLKPTLV.

Residues 1-49 (MEPEINCSEFCDSFPGQELDRRPLHDLCKTTITESQHSSTAASPLSPAL) are Extracellular-facing. N-linked (GlcNAc...) asparagine glycosylation occurs at Asn-6. A helical transmembrane segment spans residues 50 to 70 (LGIMWTFLSCGLLLVLFFLAF). The Cytoplasmic portion of the chain corresponds to 71–86 (TIRCRKNRIVKMSSPN). The chain crosses the membrane as a helical span at residues 87–107 (LNVVTLLGSCLTYISAYLFGI). Residues 108–118 (QDALEGSSVEA) lie on the Extracellular side of the membrane. A helical membrane pass occupies residues 119 to 139 (LIQTRLSLLCIGTSLVFGPIL). Residues 140-164 (GKSWRLYKVFTQRVPDKRVIIKDLQ) are Cytoplasmic-facing. A helical transmembrane segment spans residues 165-185 (LLGLVAALVVADVILLVTWVL). The Extracellular portion of the chain corresponds to 186 to 222 (TDPIQCLQMLGVSMKVTGRDVSCSLTNTHFCASRYSD). A helical membrane pass occupies residues 223 to 243 (VWIALVLGCKGLLLLYGAYLA). The Cytoplasmic portion of the chain corresponds to 244 to 257 (GLTNHVSSPPVNQS). A helical transmembrane segment spans residues 258-278 (LTIMVGVNLLLLTAGLLFVVT). Topologically, residues 279-288 (RYLHSWPNLV) are extracellular. Residues 289 to 309 (FGLTSGGIFVCTTTVNCCVFI) form a helical membrane-spanning segment. Topologically, residues 310-798 (PQLKQWKAFE…FKDDLKPTLV (489 aa)) are cytoplasmic. A coiled-coil region spans residues 353–390 (DEKSCMERLLTEKNAVIESLQEQVSNAKEKLVKLMSAE). Disordered regions lie at residues 441–497 (HVQG…PMAP), 546–666 (SEAP…KQCE), and 693–715 (PAAP…PRLS). Basic and acidic residues predominate over residues 479-492 (PKAEQSEGPERGDQ). Polar residues predominate over residues 559–572 (LWKSTTSRSPQKLS). The segment covering 583 to 594 (VRRRRAAQRARS) has biased composition (basic residues). The segment covering 606–624 (HQANSTVSSSQSGLIVQNR) has biased composition (polar residues). The segment covering 639–648 (PRSSSVKPSP) has biased composition (low complexity).

It belongs to the G-protein coupled receptor 3 family. GABA-B receptor subfamily. Expressed in the outer and inner hair cells of the organ of Corti (at protein level). Expressed in the utricle and saccule within the vestibule (at protein level).

It localises to the cell membrane. The protein localises to the postsynaptic cell membrane. Orphan G-protein coupled receptor involved in the regulation of hair cell orientation in mechanosensory organs of the inner ear. It is required to trigger a 180 degree reversal in hair cell orientation, creating a virtual line of polarity reversal (LPR) across which stereociliary bundles are arranged in opposite orientations. The polypeptide is Probable G-protein coupled receptor 156 (Gpr156) (Mus musculus (Mouse)).